We begin with the raw amino-acid sequence, 563 residues long: Calnexin homolog (563 aa).

An N-terminal signal peptide occupies residues 1-23 (MRFNAAITGALVSSATLMGQAHA). Residues 24–493 (EETEKKADAT…PINAVKQVPE (470 aa)) lie on the Lumenal side of the membrane. Position 98 (aspartate 98) interacts with Ca(2+). Cysteine 141 and cysteine 175 are disulfide-bonded. Positions 145, 147, 166, and 173 each coordinate an alpha-D-glucoside. Asparagine 236 carries N-linked (GlcNAc...) asparagine glycosylation. The interval 241-323 (EDFAPPVNPE…EKPEDWDDEE (83 aa)) is disordered. Basic and acidic residues predominate over residues 249–279 (PEKEIDDPKDKKPADWVDEAKIPDPEAKKPD). A p domain (Extended arm) region spans residues 253–386 (IDDPKDKKPA…RKIPNPAYFE (134 aa)). A compositionally biased stretch (acidic residues) spans 280 to 305 (DWDEDAPYEIVDEEATMPEDWLEDEP). An intrachain disulfide couples cysteine 337 to cysteine 343. An an alpha-D-glucoside-binding site is contributed by glutamate 402. Residue aspartate 413 participates in Ca(2+) binding. The helical transmembrane segment at 494 to 514 (VAGGLGALLLTMILVIVGAVG) threads the bilayer. The Cytoplasmic segment spans residues 515-563 (ASSPAPAAAAKKGKEAASAAKEKASEAVSSAADTAKGAATKRNTRSSAQ). Positions 521 to 563 (AAAAKKGKEAASAAKEKASEAVSSAADTAKGAATKRNTRSSAQ) are disordered. Over residues 526–539 (KGKEAASAAKEKAS) the composition is skewed to basic and acidic residues.

The protein belongs to the calreticulin family.

Its subcellular location is the endoplasmic reticulum membrane. Interacts with newly synthesized monoglucosylated glycoproteins in the endoplasmic reticulum. It may act in assisting protein assembly and/or in the retention within the ER of unassembled protein subunits. It seems to play a major role in the quality control apparatus of the ER by the retention of incorrectly folded proteins. In Aspergillus fumigatus (strain ATCC MYA-4609 / CBS 101355 / FGSC A1100 / Af293) (Neosartorya fumigata), this protein is Calnexin homolog.